The sequence spans 154 residues: MLAAALRRCXASVRVLLPKPGAAAPSSWSSSAFRATAAIQSVRCYSHGSHETDEEFDARWVTYFSKPDLDAWELRKGMNTLVGYDLVPEPKIIDAALRACRRLDDFASAVRILEVVKDKAGPHKEIYPYIIQELRPTLDELGISTPEELGLDKP.

The transit peptide at 1–45 (MLAAALRRCXASVRVLLPKPGAAAPSSWSSSAFRATAAIQSVRCY) directs the protein to the mitochondrion. Residues 2–21 (LAAALRRCXASVRVLLPKPG) carry the SIFI-degron motif. Lysine 91 and lysine 117 each carry N6-acetyllysine. Residue threonine 145 is modified to Phosphothreonine.

Belongs to the cytochrome c oxidase subunit 5A family. In terms of assembly, component of the cytochrome c oxidase (complex IV, CIV), a multisubunit enzyme composed of 14 subunits. The complex is composed of a catalytic core of 3 subunits MT-CO1, MT-CO2 and MT-CO3, encoded in the mitochondrial DNA, and 11 supernumerary subunits COX4I, COX5A, COX5B, COX6A, COX6B, COX6C, COX7A, COX7B, COX7C, COX8 and NDUFA4, which are encoded in the nuclear genome. The complex exists as a monomer or a dimer and forms supercomplexes (SCs) in the inner mitochondrial membrane with NADH-ubiquinone oxidoreductase (complex I, CI) and ubiquinol-cytochrome c oxidoreductase (cytochrome b-c1 complex, complex III, CIII), resulting in different assemblies (supercomplex SCI(1)III(2)IV(1) and megacomplex MCI(2)III(2)IV(2)). Interacts with AFG1L. Interacts with RAB5IF. In response to mitochondrial stress, the precursor protein is ubiquitinated by the SIFI complex in the cytoplasm before mitochondrial import, leading to its degradation. Within the SIFI complex, UBR4 initiates ubiquitin chain that are further elongated or branched by KCMF1.

It localises to the mitochondrion inner membrane. It functions in the pathway energy metabolism; oxidative phosphorylation. In terms of biological role, component of the cytochrome c oxidase, the last enzyme in the mitochondrial electron transport chain which drives oxidative phosphorylation. The respiratory chain contains 3 multisubunit complexes succinate dehydrogenase (complex II, CII), ubiquinol-cytochrome c oxidoreductase (cytochrome b-c1 complex, complex III, CIII) and cytochrome c oxidase (complex IV, CIV), that cooperate to transfer electrons derived from NADH and succinate to molecular oxygen, creating an electrochemical gradient over the inner membrane that drives transmembrane transport and the ATP synthase. Cytochrome c oxidase is the component of the respiratory chain that catalyzes the reduction of oxygen to water. Electrons originating from reduced cytochrome c in the intermembrane space (IMS) are transferred via the dinuclear copper A center (CU(A)) of subunit 2 and heme A of subunit 1 to the active site in subunit 1, a binuclear center (BNC) formed by heme A3 and copper B (CU(B)). The BNC reduces molecular oxygen to 2 water molecules using 4 electrons from cytochrome c in the IMS and 4 protons from the mitochondrial matrix. The protein is Cytochrome c oxidase subunit 5A, mitochondrial (COX5A) of Notamacropus parma (Parma wallaby).